The chain runs to 169 residues: SsrA-binding protein (169 aa).

Belongs to the SmpB family.

Its subcellular location is the cytoplasm. Its function is as follows. Required for rescue of stalled ribosomes mediated by trans-translation. Binds to transfer-messenger RNA (tmRNA), required for stable association of tmRNA with ribosomes. tmRNA and SmpB together mimic tRNA shape, replacing the anticodon stem-loop with SmpB. tmRNA is encoded by the ssrA gene; the 2 termini fold to resemble tRNA(Ala) and it encodes a 'tag peptide', a short internal open reading frame. During trans-translation Ala-aminoacylated tmRNA acts like a tRNA, entering the A-site of stalled ribosomes, displacing the stalled mRNA. The ribosome then switches to translate the ORF on the tmRNA; the nascent peptide is terminated with the 'tag peptide' encoded by the tmRNA and targeted for degradation. The ribosome is freed to recommence translation, which seems to be the essential function of trans-translation. The protein is SsrA-binding protein of Mycolicibacterium paratuberculosis (strain ATCC BAA-968 / K-10) (Mycobacterium paratuberculosis).